Reading from the N-terminus, the 75-residue chain is Exodeoxyribonuclease 7 small subunit (75 aa).

The protein belongs to the XseB family. In terms of assembly, heterooligomer composed of large and small subunits.

The protein resides in the cytoplasm. The enzyme catalyses Exonucleolytic cleavage in either 5'- to 3'- or 3'- to 5'-direction to yield nucleoside 5'-phosphates.. In terms of biological role, bidirectionally degrades single-stranded DNA into large acid-insoluble oligonucleotides, which are then degraded further into small acid-soluble oligonucleotides. The sequence is that of Exodeoxyribonuclease 7 small subunit from Thermotoga maritima (strain ATCC 43589 / DSM 3109 / JCM 10099 / NBRC 100826 / MSB8).